Consider the following 578-residue polypeptide: Probable arginine--tRNA ligase, mitochondrial (578 aa).

A mitochondrion-targeting transit peptide spans 1 to 16 (MACGFRRSIASQLSRV). L-arginine is bound by residues 133–135 (SPN), His144, Tyr322, Asp326, and Gln350. A 'HIGH' region motif is present at residues 133 to 144 (SPNVAKKFHVGH). At Lys568 the chain carries N6-acetyllysine.

Belongs to the class-I aminoacyl-tRNA synthetase family.

It is found in the mitochondrion membrane. The enzyme catalyses tRNA(Arg) + L-arginine + ATP = L-arginyl-tRNA(Arg) + AMP + diphosphate. Its function is as follows. Catalyzes the attachment of arginine to tRNA(Arg) in a two-step reaction: arginine is first activated by ATP to form Arg-AMP and then transferred to the acceptor end of tRNA(Arg). The chain is Probable arginine--tRNA ligase, mitochondrial (RARS2) from Bos taurus (Bovine).